The chain runs to 132 residues: Small ribosomal subunit protein uS11 (132 aa).

The protein belongs to the universal ribosomal protein uS11 family. Part of the 30S ribosomal subunit. Interacts with proteins S7 and S18. Binds to IF-3.

Functionally, located on the platform of the 30S subunit, it bridges several disparate RNA helices of the 16S rRNA. Forms part of the Shine-Dalgarno cleft in the 70S ribosome. The protein is Small ribosomal subunit protein uS11 of Chlamydia trachomatis serovar D (strain ATCC VR-885 / DSM 19411 / UW-3/Cx).